Reading from the N-terminus, the 92-residue chain is Small ribosomal subunit protein uS19c (92 aa).

The protein belongs to the universal ribosomal protein uS19 family.

Its subcellular location is the plastid. Functionally, protein S19 forms a complex with S13 that binds strongly to the 16S ribosomal RNA. In Cuscuta obtusiflora (Peruvian dodder), this protein is Small ribosomal subunit protein uS19c.